The sequence spans 115 residues: Divalent-cation tolerance protein CutA (115 aa).

Cys19, His86, and His87 together coordinate Cu cation.

Belongs to the CutA family. Homotrimer. It depends on Cu cation as a cofactor.

Its subcellular location is the cytoplasm. Involved in resistance toward heavy metals. This is Divalent-cation tolerance protein CutA from Citrobacter koseri (strain ATCC BAA-895 / CDC 4225-83 / SGSC4696).